The chain runs to 456 residues: Histidine--tRNA ligase (456 aa).

It belongs to the class-II aminoacyl-tRNA synthetase family. As to quaternary structure, homodimer.

The protein localises to the cytoplasm. It carries out the reaction tRNA(His) + L-histidine + ATP = L-histidyl-tRNA(His) + AMP + diphosphate + H(+). This is Histidine--tRNA ligase (hisS) from Borreliella burgdorferi (strain ATCC 35210 / DSM 4680 / CIP 102532 / B31) (Borrelia burgdorferi).